We begin with the raw amino-acid sequence, 180 residues long: Large ribosomal subunit protein uL5 (180 aa).

This sequence belongs to the universal ribosomal protein uL5 family. As to quaternary structure, part of the 50S ribosomal subunit; part of the 5S rRNA/L5/L18/L25 subcomplex. Contacts the 5S rRNA and the P site tRNA. Forms a bridge to the 30S subunit in the 70S ribosome.

In terms of biological role, this is one of the proteins that bind and probably mediate the attachment of the 5S RNA into the large ribosomal subunit, where it forms part of the central protuberance. In the 70S ribosome it contacts protein S13 of the 30S subunit (bridge B1b), connecting the 2 subunits; this bridge is implicated in subunit movement. Contacts the P site tRNA; the 5S rRNA and some of its associated proteins might help stabilize positioning of ribosome-bound tRNAs. The sequence is that of Large ribosomal subunit protein uL5 from Ruminiclostridium cellulolyticum (strain ATCC 35319 / DSM 5812 / JCM 6584 / H10) (Clostridium cellulolyticum).